The sequence spans 309 residues: Methionyl-tRNA formyltransferase (309 aa).

109–112 (SLLP) is a binding site for (6S)-5,6,7,8-tetrahydrofolate.

Belongs to the Fmt family.

It catalyses the reaction L-methionyl-tRNA(fMet) + (6R)-10-formyltetrahydrofolate = N-formyl-L-methionyl-tRNA(fMet) + (6S)-5,6,7,8-tetrahydrofolate + H(+). Functionally, attaches a formyl group to the free amino group of methionyl-tRNA(fMet). The formyl group appears to play a dual role in the initiator identity of N-formylmethionyl-tRNA by promoting its recognition by IF2 and preventing the misappropriation of this tRNA by the elongation apparatus. The protein is Methionyl-tRNA formyltransferase of Clostridioides difficile (strain 630) (Peptoclostridium difficile).